The primary structure comprises 237 residues: Ras-related protein Rab-23 (237 aa).

Ala-19 is a GDP binding site. Val-20, Gly-21, Lys-22, Ser-23, and Ser-24 together coordinate GTP. GDP is bound by residues Gly-21, Lys-22, Ser-23, Ser-24, and Asp-37. Ser-23 is a Mg(2+) binding site. Residues 28–46 carry the Switch 1 motif; the sequence is RYCKGIFTKDYKKTIGVDF. GTP is bound at residue Tyr-38. GDP is bound at residue Lys-40. Thr-41 lines the GTP pocket. Positions 41 and 64 each coordinate Mg(2+). Residues 65-84 carry the Switch 2 motif; sequence TAGQEEFDAITKAYYRGAQA. Residues Gly-67, Asn-121, Lys-122, Asp-124, Ser-151, Val-152, and Lys-153 each coordinate GTP. Residues Asn-121, Lys-122, and Asp-124 each contribute to the GDP site. Residues Val-152 and Lys-153 each coordinate GDP. 2 positions are modified to phosphoserine: Ser-186 and Ser-187. The tract at residues 204–237 is disordered; that stretch reads QNSSSLNGGDVINLRPNKQRTKRTRNPFSSCSVP. At Cys-234 the chain carries Cysteine methyl ester. Residue Cys-234 is the site of S-geranylgeranyl cysteine attachment. The propeptide at 235–237 is removed in mature form; it reads SVP.

Belongs to the small GTPase superfamily. Rab family. As to quaternary structure, interacts with SUFU. It depends on Mg(2+) as a cofactor. In terms of tissue distribution, detected in brain neurons (at protein level). Forebrain and midbrain.

Its subcellular location is the cell membrane. It localises to the cytoplasm. The protein localises to the endosome membrane. The protein resides in the cytoplasmic vesicle. It is found in the autophagosome. Its subcellular location is the phagosome. It localises to the phagosome membrane. It catalyses the reaction GTP + H2O = GDP + phosphate + H(+). Its activity is regulated as follows. Regulated by guanine nucleotide exchange factors (GEFs) which promote the exchange of bound GDP for free GTP. Regulated by GTPase activating proteins (GAPs) which increase the GTP hydrolysis activity. Inhibited by GDP dissociation inhibitors (GDIs). The small GTPases Rab are key regulators of intracellular membrane trafficking, from the formation of transport vesicles to their fusion with membranes. Rabs cycle between an inactive GDP-bound form and an active GTP-bound form that is able to recruit to membranes different set of downstream effectors directly responsible for vesicle formation, movement, tethering and fusion. Plays a role in autophagic vacuole assembly, and mediates defense against pathogens, such as S.aureus, by promoting their capture by autophagosomes that then merge with lysosomes. Together with SUFU, prevents nuclear import of GLI1, and thereby inhibits GLI1 transcription factor activity. Regulates GLI1 in differentiating chondrocytes. Likewise, regulates GLI3 proteolytic processing and modulates GLI2 and GLI3 transcription factor activity. The chain is Ras-related protein Rab-23 from Mus musculus (Mouse).